A 150-amino-acid chain; its full sequence is Peptide deformylase (150 aa).

Fe cation-binding residues include Cys-88 and His-130. Glu-131 is an active-site residue. Residue His-134 participates in Fe cation binding.

This sequence belongs to the polypeptide deformylase family. Fe(2+) serves as cofactor.

It catalyses the reaction N-terminal N-formyl-L-methionyl-[peptide] + H2O = N-terminal L-methionyl-[peptide] + formate. In terms of biological role, removes the formyl group from the N-terminal Met of newly synthesized proteins. Requires at least a dipeptide for an efficient rate of reaction. N-terminal L-methionine is a prerequisite for activity but the enzyme has broad specificity at other positions. The polypeptide is Peptide deformylase (Desulfitobacterium hafniense (strain Y51)).